The primary structure comprises 492 residues: Glutamyl-tRNA(Gln) amidotransferase subunit A, mitochondrial (492 aa).

Active-site charge relay system residues include lysine 78 and serine 159. The active-site Acyl-ester intermediate is serine 183.

This sequence belongs to the amidase family. GatA subfamily. As to quaternary structure, subunit of the heterotrimeric GatCAB amidotransferase (AdT) complex, composed of A, B and C subunits.

It localises to the mitochondrion. The enzyme catalyses L-glutamyl-tRNA(Gln) + L-glutamine + ATP + H2O = L-glutaminyl-tRNA(Gln) + L-glutamate + ADP + phosphate + H(+). In terms of biological role, allows the formation of correctly charged Gln-tRNA(Gln) through the transamidation of misacylated Glu-tRNA(Gln) in the mitochondria. The reaction takes place in the presence of glutamine and ATP through an activated gamma-phospho-Glu-tRNA(Gln). The protein is Glutamyl-tRNA(Gln) amidotransferase subunit A, mitochondrial of Anopheles gambiae (African malaria mosquito).